Consider the following 359-residue polypeptide: DNA replication and repair protein RecF (359 aa).

30-37 is a binding site for ATP; sequence GPNGSGKT.

It belongs to the RecF family.

It localises to the cytoplasm. Functionally, the RecF protein is involved in DNA metabolism; it is required for DNA replication and normal SOS inducibility. RecF binds preferentially to single-stranded, linear DNA. It also seems to bind ATP. This is DNA replication and repair protein RecF from Vibrio vulnificus (strain YJ016).